Reading from the N-terminus, the 354-residue chain is D-alanine--D-alanine ligase (354 aa).

Positions 132–342 constitute an ATP-grasp domain; that stretch reads KMVFERAGLP…FPSLVDRLLQ (211 aa). 168 to 223 is an ATP binding site; it reads EAQVGYPCFVKPANLGSSVGIAKVRNRSELEAALDNAASYDRRIIVEAGLTDIREV. Residues Asp295, Glu309, and Asn311 each contribute to the Mg(2+) site.

The protein belongs to the D-alanine--D-alanine ligase family. It depends on Mg(2+) as a cofactor. The cofactor is Mn(2+).

Its subcellular location is the cytoplasm. The catalysed reaction is 2 D-alanine + ATP = D-alanyl-D-alanine + ADP + phosphate + H(+). The protein operates within cell wall biogenesis; peptidoglycan biosynthesis. Functionally, cell wall formation. This is D-alanine--D-alanine ligase from Synechocystis sp. (strain ATCC 27184 / PCC 6803 / Kazusa).